The chain runs to 344 residues: N-acetyl-gamma-glutamyl-phosphate reductase (344 aa).

The active site involves C150.

This sequence belongs to the NAGSA dehydrogenase family. Type 1 subfamily.

The protein resides in the cytoplasm. The enzyme catalyses N-acetyl-L-glutamate 5-semialdehyde + phosphate + NADP(+) = N-acetyl-L-glutamyl 5-phosphate + NADPH + H(+). It functions in the pathway amino-acid biosynthesis; L-arginine biosynthesis; N(2)-acetyl-L-ornithine from L-glutamate: step 3/4. In terms of biological role, catalyzes the NADPH-dependent reduction of N-acetyl-5-glutamyl phosphate to yield N-acetyl-L-glutamate 5-semialdehyde. The polypeptide is N-acetyl-gamma-glutamyl-phosphate reductase (Pseudomonas fluorescens (strain Pf0-1)).